Here is a 182-residue protein sequence, read N- to C-terminus: Flavin prenyltransferase UbiX (182 aa).

Residues 9–11, Ser35, 86–89, and Arg121 each bind FMN; these read GAS and SIKT. 2 residues coordinate dimethylallyl phosphate: Tyr151 and Arg167.

This sequence belongs to the UbiX/PAD1 family.

The catalysed reaction is dimethylallyl phosphate + FMNH2 = prenylated FMNH2 + phosphate. In terms of biological role, flavin prenyltransferase that catalyzes the synthesis of the prenylated FMN cofactor (prenyl-FMN) for 4-hydroxy-3-polyprenylbenzoic acid decarboxylase UbiD. The prenyltransferase is metal-independent and links a dimethylallyl moiety from dimethylallyl monophosphate (DMAP) to the flavin N5 and C6 atoms of FMN. This Archaeoglobus fulgidus (strain ATCC 49558 / DSM 4304 / JCM 9628 / NBRC 100126 / VC-16) protein is Flavin prenyltransferase UbiX.